The primary structure comprises 143 residues: Large ribosomal subunit protein uL15 (143 aa).

Residues 1–47 (MKLHELTPSEGSRFSRRRIGRGDSSGQGKTSGRGQKGQKARGKVRVG) form a disordered region. Residues 23-35 (DSSGQGKTSGRGQ) show a composition bias toward gly residues.

Belongs to the universal ribosomal protein uL15 family. In terms of assembly, part of the 50S ribosomal subunit.

Functionally, binds to the 23S rRNA. The sequence is that of Large ribosomal subunit protein uL15 from Lactiplantibacillus plantarum (strain ATCC BAA-793 / NCIMB 8826 / WCFS1) (Lactobacillus plantarum).